Reading from the N-terminus, the 254-residue chain is Large ribosomal subunit protein uL4 (254 aa).

The interval 45–70 (PWGNDPEAGKRTSAKGWGSGRGTARV) is disordered.

The protein belongs to the universal ribosomal protein uL4 family. Part of the 50S ribosomal subunit.

Functionally, one of the primary rRNA binding proteins, this protein initially binds near the 5'-end of the 23S rRNA. It is important during the early stages of 50S assembly. It makes multiple contacts with different domains of the 23S rRNA in the assembled 50S subunit and ribosome. Forms part of the polypeptide exit tunnel. The polypeptide is Large ribosomal subunit protein uL4 (Methanobrevibacter smithii (strain ATCC 35061 / DSM 861 / OCM 144 / PS)).